The sequence spans 367 residues: UDP-N-acetylglucosamine--N-acetylmuramyl-(pentapeptide) pyrophosphoryl-undecaprenol N-acetylglucosamine transferase (367 aa).

UDP-N-acetyl-alpha-D-glucosamine is bound by residues 11–13 (TAG), asparagine 125, arginine 163, serine 197, and glutamine 289.

The protein belongs to the glycosyltransferase 28 family. MurG subfamily.

It is found in the cell membrane. It catalyses the reaction di-trans,octa-cis-undecaprenyl diphospho-N-acetyl-alpha-D-muramoyl-L-alanyl-D-glutamyl-meso-2,6-diaminopimeloyl-D-alanyl-D-alanine + UDP-N-acetyl-alpha-D-glucosamine = di-trans,octa-cis-undecaprenyl diphospho-[N-acetyl-alpha-D-glucosaminyl-(1-&gt;4)]-N-acetyl-alpha-D-muramoyl-L-alanyl-D-glutamyl-meso-2,6-diaminopimeloyl-D-alanyl-D-alanine + UDP + H(+). It functions in the pathway cell wall biogenesis; peptidoglycan biosynthesis. Cell wall formation. Catalyzes the transfer of a GlcNAc subunit on undecaprenyl-pyrophosphoryl-MurNAc-pentapeptide (lipid intermediate I) to form undecaprenyl-pyrophosphoryl-MurNAc-(pentapeptide)GlcNAc (lipid intermediate II). The chain is UDP-N-acetylglucosamine--N-acetylmuramyl-(pentapeptide) pyrophosphoryl-undecaprenol N-acetylglucosamine transferase from Clavibacter michiganensis subsp. michiganensis (strain NCPPB 382).